The following is a 1293-amino-acid chain: DNA repair protein complementing XP-C cells homolog (1293 aa).

Disordered regions lie at residues 1-199 (MSDE…FEDK), 217-239 (ERTR…QAAT), 255-341 (QSVE…NISG), 514-640 (DLIP…SKCL), and 658-919 (LSSK…EPAK). Over residues 18-30 (DEWKPSKDVKGGE) the composition is skewed to basic and acidic residues. Ser-31, Ser-32, and Ser-37 each carry phosphoserine. Residues 31–43 (SSDDDDSDFDELQ) are compositionally biased toward acidic residues. The segment covering 51–60 (SSGRSSAVAG) has biased composition (low complexity). 2 stretches are compositionally biased toward polar residues: residues 101-130 (FPTS…SGAR) and 226-238 (RNVT…SQAA). The segment covering 288-301 (SKTKSTRIKRHTKT) has biased composition (basic residues). A compositionally biased stretch (acidic residues) spans 313 to 335 (DTDDSDFEEVADADLSSDQDDGE). The segment covering 520-578 (LRPDDKNKSQTVESERESEDEKPKKDKKAGKPAEKESSKSTISKEAEKKNNAKKAEAKP) has biased composition (basic and acidic residues). Residues Ser-533 and Ser-537 each carry the phosphoserine modification. A compositionally biased stretch (low complexity) spans 580 to 594 (SKSTTKGSETTKSGT). A compositionally biased stretch (basic and acidic residues) spans 598–612 (VKKELSLSSKLVEKS). Positions 658-692 (LSSKLVLKSKNQSSFSSNKSDTSFEENPSTSSSSK) are enriched in low complexity. The span at 693–711 (SLKEETAKLSSSKLEDKKV) shows a compositional bias: basic and acidic residues. Positions 720-737 (KVQSSLLKRVTTQNISES) are enriched in polar residues. Residues 806 to 818 (HLQEQRNTRETRS) are compositionally biased toward basic and acidic residues. Residues Ser-908 and Ser-911 each carry the phosphoserine modification. Short sequence motifs (nuclear localization signal) lie at residues 922 to 938 (KKAP…RKDR), 1195 to 1211 (KKTV…ICKK), and 1275 to 1291 (KKLI…KKKY).

Belongs to the XPC family. As to quaternary structure, heterodimer.

Its subcellular location is the nucleus. In terms of biological role, involved in DNA excision repair. May play a part in DNA damage recognition and/or in altering chromatin structure to allow access by damage-processing enzymes. Involved in nucleotide excision repair of DNA damaged with UV light, bulky adducts, or cross-linking agents. This is DNA repair protein complementing XP-C cells homolog from Drosophila melanogaster (Fruit fly).